Here is a 191-residue protein sequence, read N- to C-terminus: Chromobox protein homolog 5 (191 aa).

A disordered region spans residues 1–21; the sequence is MGKKTKRTADSSSSEDEEEYV. Phosphoserine is present on residues serine 11, serine 12, serine 13, and serine 14. A Chromo 1 domain is found at 20–78; that stretch reads YVVEKVLDRRMVKGQVEYLLKWKGFSEEHNTWEPEKNLDCPELISEFMKKYKKMKEGEN. Residue lysine 32 forms a Glycyl lysine isopeptide (Lys-Gly) (interchain with G-Cter in SUMO2) linkage. Lysine 40 bears the N6-acetyllysine mark. Residues 70–117 are disordered; it reads YKKMKEGENNKPREKSEGNKRKSSFSNSADDIKSKKKREQSNDIARGF. Positions 73–89 are enriched in basic and acidic residues; the sequence is MKEGENNKPREKSEGNK. A Glycyl lysine isopeptide (Lys-Gly) (interchain with G-Cter in SUMO2) cross-link involves residue lysine 91. 4 positions are modified to phosphoserine: serine 92, serine 93, serine 95, and serine 97. Residues lysine 102, lysine 106, lysine 154, and lysine 184 each participate in a glycyl lysine isopeptide (Lys-Gly) (interchain with G-Cter in SUMO2) cross-link. One can recognise a Chromo 2; shadow subtype domain in the interval 121–179; that stretch reads LEPEKIIGATDSCGDLMFLMKWKDTDEADLVLAKEANVKCPQIVIAFYEERLTWHAYPE.

In terms of assembly, homodimer. Interacts with histone H3 methylated at 'Lys-9'. Interacts (via Chromo 2; shadow subtype domain) with the MIS12 complex subunit NSL1; the interaction is direct, involves dimeric CBX5, and occurs during interphase. Interacts with POGZ; POGZ and PXVXL motif-containing proteins such as INCENP and TRIM28 compete for interaction with CBX5. Interacts with LRIF1 (via PxVxL motif). Interacts with INCENP. Interacts with TRIM24. Interacts (via the chromoshadow domain) with ATRX; the interaction is direct. Interacts (via the chromoshadow domain) with CHAF1A; the interaction is direct. Interacts (via the chromoshadow domain) with LBR; the interaction is direct. Interacts (via the chromoshadow domain) with NIPBL; the interaction is direct. Interacts (via the chromoshadow domain) with SP100; the interaction is direct. Interacts (via the chromoshadow domain) with STAM2; the interaction is direct. Interacts (via the chromoshadow domain) with TRIM28; the interaction is direct. Interacts (via the chromoshadow domain) with CBX3; the interaction is direct. Interacts with PRR14 (via N-terminus). Interacts with RRP1B. Interacts with HNRNPU (via C-terminus); this interaction is, at least in part, RNA-dependent. Interacts with ZNF263; recruited to the SIX3 promoter along with other proteins involved in chromatin modification and transcriptional corepression where it contributes to transcriptional repression. Interacts with AURKB during mitosis. Interacts with CHAMP1. Interacts with BAHD1. Interacts with HP1BP3. Interacts with CHD3. Interacts with CHD4. Interacts with SMYD5. Interacts with KMT5B. Interacts with KMT5C. Phosphorylation of HP1 and LBR may be responsible for some of the alterations in chromatin organization and nuclear structure which occur at various times during the cell cycle. Phosphorylated during interphase and possibly hyper-phosphorylated during mitosis. Post-translationally, ubiquitinated.

It localises to the nucleus. The protein localises to the chromosome. Its subcellular location is the centromere. Functionally, component of heterochromatin that recognizes and binds histone H3 tails methylated at 'Lys-9' (H3K9me), leading to epigenetic repression. In contrast, it is excluded from chromatin when 'Tyr-41' of histone H3 is phosphorylated (H3Y41ph). May contribute to the association of heterochromatin with the inner nuclear membrane by interactions with the lamin-B receptor (LBR). Involved in the formation of kinetochore through interaction with the MIS12 complex subunit NSL1. Required for the formation of the inner centromere. In terms of biological role, component of heterochromatin that recognizes and binds histone H3 tails methylated at 'Lys-9' (H3K9me), leading to epigenetic repression. In contrast, it is excluded from chromatin when 'Tyr-41' of histone H3 is phosphorylated (H3Y41ph). Can interact with lamin-B receptor (LBR). This interaction can contribute to the association of the heterochromatin with the inner nuclear membrane. Involved in the formation of functional kinetochore through interaction with MIS12 complex proteins. The sequence is that of Chromobox protein homolog 5 (Cbx5) from Mus musculus (Mouse).